The chain runs to 314 residues: tRNA dimethylallyltransferase (314 aa).

11-18 provides a ligand contact to ATP; the sequence is GPTAVGKT. Residue 13 to 18 participates in substrate binding; the sequence is TAVGKT. Residues 36–39 form an interaction with substrate tRNA region; sequence DSMQ.

It belongs to the IPP transferase family. As to quaternary structure, monomer. The cofactor is Mg(2+).

The catalysed reaction is adenosine(37) in tRNA + dimethylallyl diphosphate = N(6)-dimethylallyladenosine(37) in tRNA + diphosphate. Functionally, catalyzes the transfer of a dimethylallyl group onto the adenine at position 37 in tRNAs that read codons beginning with uridine, leading to the formation of N6-(dimethylallyl)adenosine (i(6)A). In Bacillus anthracis, this protein is tRNA dimethylallyltransferase.